The chain runs to 280 residues: Late embryogenesis abundant protein M17 (280 aa).

A signal peptide spans Met1–Ala22. Asn23 carries N-linked (GlcNAc...) asparagine glycosylation. 2 consecutive repeat copies span residues Gly76–Ser97 and Gly131–Ser152. The tract at residues Gly76–Ser262 is 4 X 22 AA repeats, Cys-rich. Residues Val163–Gly184 form a disordered region. The span at Gly173–Gly184 shows a compositional bias: gly residues. Residues Gly186–Ser207 form repeat 3. A disordered region spans residues Val218–Gly239. Over residues Gly228 to Gly239 the composition is skewed to gly residues. Repeat unit 4 spans residues Gly241 to Ser262.

Its function is as follows. May be involved in the acquisition of desiccation tolerance during late phase of embryogenesis. The polypeptide is Late embryogenesis abundant protein M17 (Arabidopsis thaliana (Mouse-ear cress)).